An 862-amino-acid chain; its full sequence is Rab GTPase-binding effector protein 1 (862 aa).

Position 2 is an N-acetylalanine (Ala-2). Residues 11–345 are a coiled coil; that stretch reads DVSLQQRVAE…KKTDTEEEVK (335 aa). Lys-282 carries the N6-acetyllysine modification. Residues 315-374 form a disordered region; it reads ELKKKDQEEDEQQRVNKRKDNKKTDTEEEVKIPVVCALTQEESSTPLSNEEEHLDSTHGS. Residues 336–345 show a composition bias toward basic and acidic residues; sequence KKTDTEEEVK. Phosphoserine occurs at positions 374, 377, and 407. Phosphothreonine is present on Thr-408. Phosphoserine is present on Ser-410. A coiled-coil region spans residues 534–816; it reads DMCSNYEKQL…LQTELDVSEQ (283 aa).

Belongs to the rabaptin family. As to quaternary structure, heterodimer with RABGEF1. The heterodimer binds RAB4A and RAB5A that have been activated by GTP-binding. Interacts with TSC2. Interacts with GGA1 (via GAE domain), GGA2 (via GAE domain) and GGA3 (via GAE domain). Interacts with AP1G1 (via GAE domain). Interacts with AP1G2 (via GAE domain). Interacts with ECPAS. Interacts with KCNH1. Interacts with PKD1 (via C-terminal domain) and GGA1; the interactions recruit PKD1:PKD2 complex to GGA1 and ARL3 at trans-Golgi network. Interacts with KCNH1. In terms of processing, proteolytic cleavage by caspases in apoptotic cells causes loss of endosome fusion activity.

It is found in the cytoplasm. It localises to the early endosome. Its subcellular location is the recycling endosome. The protein localises to the cytoplasmic vesicle. In terms of biological role, rab effector protein acting as linker between gamma-adaptin, RAB4A and RAB5A. Involved in endocytic membrane fusion and membrane trafficking of recycling endosomes. Involved in KCNH1 channels trafficking to and from the cell membrane. Stimulates RABGEF1 mediated nucleotide exchange on RAB5A. Mediates the traffic of PKD1:PKD2 complex from the endoplasmic reticulum through the Golgi to the cilium. The chain is Rab GTPase-binding effector protein 1 (Rabep1) from Mus musculus (Mouse).